A 182-amino-acid chain; its full sequence is Putative manganese efflux pump MntP (182 aa).

Helical transmembrane passes span I7–G27, I38–L58, T71–F91, L106–I126, I131–L151, and F159–I179.

The protein belongs to the MntP (TC 9.B.29) family.

Its subcellular location is the cell membrane. In terms of biological role, probably functions as a manganese efflux pump. In Oceanobacillus iheyensis (strain DSM 14371 / CIP 107618 / JCM 11309 / KCTC 3954 / HTE831), this protein is Putative manganese efflux pump MntP.